The primary structure comprises 162 residues: MAETKSGKSGLISHGVAAQNRKARFDYTIKETVEAGLVLKGPEVKSLRHGRATLSEAWAGERDGEMFLFNAYIPEYQGGVLSRFEPRSPRKLLLKRKQINHLLGAVQKQGQTVVPLQIHFNERGMAKVLLGVAEGRNKADKRAAIASRDWQRDKARLMREKG.

Belongs to the SmpB family.

The protein resides in the cytoplasm. In terms of biological role, required for rescue of stalled ribosomes mediated by trans-translation. Binds to transfer-messenger RNA (tmRNA), required for stable association of tmRNA with ribosomes. tmRNA and SmpB together mimic tRNA shape, replacing the anticodon stem-loop with SmpB. tmRNA is encoded by the ssrA gene; the 2 termini fold to resemble tRNA(Ala) and it encodes a 'tag peptide', a short internal open reading frame. During trans-translation Ala-aminoacylated tmRNA acts like a tRNA, entering the A-site of stalled ribosomes, displacing the stalled mRNA. The ribosome then switches to translate the ORF on the tmRNA; the nascent peptide is terminated with the 'tag peptide' encoded by the tmRNA and targeted for degradation. The ribosome is freed to recommence translation, which seems to be the essential function of trans-translation. This is SsrA-binding protein from Granulibacter bethesdensis (strain ATCC BAA-1260 / CGDNIH1).